The chain runs to 222 residues: Interleukin-12 subunit alpha (222 aa).

Residues 1-25 (MCPLRNLLLVATLVLLNHLDHLSLG) form the signal peptide. Cystine bridges form between Cys-40–Cys-113, Cys-67–Cys-199, and Cys-88–Cys-126. Asn-42 and Asn-96 each carry an N-linked (GlcNAc...) asparagine glycan.

This sequence belongs to the IL-6 superfamily. Heterodimer with IL12B; disulfide-linked. This heterodimer is known as interleukin IL-12. Heterodimer with EBI3/IL27B; not disulfide-linked. This heterodimer is known as interleukin IL-35. Interacts with NBR1; this interaction promotes IL-12 secretion.

It localises to the secreted. Heterodimerizes with IL12B to form the IL-12 cytokine or with EBI3/IL27B to form the IL-35 cytokine. IL-12 is primarily produced by professional antigen-presenting cells (APCs) such as B-cells and dendritic cells (DCs) as well as macrophages and granulocytes and regulates T-cell and natural killer-cell responses, induces the production of interferon-gamma (IFN-gamma), favors the differentiation of T-helper 1 (Th1) cells and is an important link between innate resistance and adaptive immunity. Mechanistically, exerts its biological effects through a receptor composed of IL12R1 and IL12R2 subunits. Binding to the receptor results in the rapid tyrosine phosphorylation of a number of cellular substrates including the JAK family kinases TYK2 and JAK2. In turn, recruited STAT4 gets phosphorylated and translocates to the nucleus where it regulates cytokine/growth factor responsive genes. As part of IL-35, plays essential roles in maintaining the immune homeostasis of the liver microenvironment and also functions as an immune-suppressive cytokine. Mediates biological events through unconventional receptors composed of IL12RB2 and gp130/IL6ST heterodimers or homodimers. Signaling requires the transcription factors STAT1 and STAT4, which form a unique heterodimer that binds to distinct DNA sites. The polypeptide is Interleukin-12 subunit alpha (IL12A) (Sus scrofa (Pig)).